A 459-amino-acid chain; its full sequence is Alpha,alpha-trehalose-phosphate synthase [UDP-forming] (459 aa).

D-glucose 6-phosphate contacts are provided by Tyr86 and Asp140. UDP is bound by residues Arg262 and Lys267. The UDP-alpha-D-glucose site is built by Arg262 and Lys267. Arg300 is a D-glucose 6-phosphate binding site. 361–369 (DGMNLVALE) contacts UDP-alpha-D-glucose. 365-369 (LVALE) provides a ligand contact to UDP.

It belongs to the glycosyltransferase 20 family. As to quaternary structure, component of the trehalose synthase complex.

It is found in the cytoplasm. It catalyses the reaction D-glucose 6-phosphate + UDP-alpha-D-glucose = alpha,alpha-trehalose 6-phosphate + UDP + H(+). In terms of biological role, synthase catalytic subunit of the trehalose synthase complex that catalyzes the production of trehalose from glucose-6-phosphate and UDP-alpha-D-glucose in a two step process. Can function independently of the complex. This Encephalitozoon cuniculi (strain GB-M1) (Microsporidian parasite) protein is Alpha,alpha-trehalose-phosphate synthase [UDP-forming] (TPS1).